We begin with the raw amino-acid sequence, 607 residues long: MPLMVQSAPSTEAIQLPKTSESAQLKRIRHTMSHVMAMAVQKLFPKAQVTIGPWTETGFYYDFDTPEPFTEADLKAIKKEMVKIIQQKLPVVREEVSREEAQQRIEALGEPYKLEILQGLTEPITLYHLGDRWWDLCAGPHVETTAELNPKAFDLESVAGAYWRGDETKAQLQRIYGTAWETPEQLTEYKRRKEEALKRDHRKLGRELGLFLFADPVGPGLPLWTPKGTILRSTLEDFLKQEQMKRGYQSVVTPHLARVDLFKVSGHWQNYREDMFPMMAEDDEARGLEQGFVLKPMNCPFHIQIYKNELRSYRELPIRLAEFGTVYRYEQSGELGGLTRVRGFTVDDSHLFVRPDQLASEFLSVVDLILSVFKALNLKKFKARLSFRDPESDKYIGSDDVWEKAESAIQAAAETLGMDYFIGVGEAAFYGPKLDFIFQDALDREWQLGTVQVDYNLPERFDLEYVAEDGSRQRPVMIHRAPFGSLERLIGILIEEYAGDFPLWLAPEQIRLLPVTETVLDYCQQVADQLRAIGVRVQVDCSGDRLGKLIRNAEKAKIPVMAVIGAQEAESETLSIRTRATGDLGSLTVADLTKRLSSAIAEKLPHL.

The segment at 200-502 (DHRKLGRELG…LIEEYAGDFP (303 aa)) is catalytic. Positions 299, 350, and 479 each coordinate Zn(2+).

This sequence belongs to the class-II aminoacyl-tRNA synthetase family. Homodimer. The cofactor is Zn(2+).

It localises to the cytoplasm. The enzyme catalyses tRNA(Thr) + L-threonine + ATP = L-threonyl-tRNA(Thr) + AMP + diphosphate + H(+). In terms of biological role, catalyzes the attachment of threonine to tRNA(Thr) in a two-step reaction: L-threonine is first activated by ATP to form Thr-AMP and then transferred to the acceptor end of tRNA(Thr). Also edits incorrectly charged L-seryl-tRNA(Thr). This is Threonine--tRNA ligase from Synechococcus sp. (strain ATCC 27144 / PCC 6301 / SAUG 1402/1) (Anacystis nidulans).